We begin with the raw amino-acid sequence, 266 residues long: Prolactin-7A1 (266 aa).

The N-terminal stretch at 1-30 (MPLSFTQPCSSGALLLLVVSNLLLWENVAC) is a signal peptide. Asparagine 36, asparagine 58, asparagine 110, asparagine 149, and asparagine 157 each carry an N-linked (GlcNAc...) asparagine glycan. 2 disulfide bridges follow: cysteine 114–cysteine 231 and cysteine 248–cysteine 257.

Belongs to the somatotropin/prolactin family. As to expression, expressed specifically in the placenta. Detected only in the trophoblast giant cells.

It is found in the secreted. This is Prolactin-7A1 (Prl7a1) from Mus musculus (Mouse).